The chain runs to 203 residues: ATP-dependent Clp protease proteolytic subunit 2 (203 aa).

The active-site Nucleophile is the Ser97. His122 is an active-site residue.

The protein belongs to the peptidase S14 family. Fourteen ClpP subunits assemble into 2 heptameric rings which stack back to back to give a disk-like structure with a central cavity, resembling the structure of eukaryotic proteasomes.

It is found in the cytoplasm. It carries out the reaction Hydrolysis of proteins to small peptides in the presence of ATP and magnesium. alpha-casein is the usual test substrate. In the absence of ATP, only oligopeptides shorter than five residues are hydrolyzed (such as succinyl-Leu-Tyr-|-NHMec, and Leu-Tyr-Leu-|-Tyr-Trp, in which cleavage of the -Tyr-|-Leu- and -Tyr-|-Trp bonds also occurs).. Its function is as follows. Cleaves peptides in various proteins in a process that requires ATP hydrolysis. Has a chymotrypsin-like activity. Plays a major role in the degradation of misfolded proteins. This is ATP-dependent Clp protease proteolytic subunit 2 from Myxococcus xanthus (strain DK1622).